Consider the following 517-residue polypeptide: Amidophosphoribosyltransferase (517 aa).

Met1 bears the N-acetylmethionine mark. Positions 1–11 (MELEELGIREE) are excised as a propeptide. Cys12 functions as the Nucleophile in the catalytic mechanism. Positions 12-261 (CGVFGCIASG…PGEIVEISRH (250 aa)) constitute a Glutamine amidotransferase type-2 domain. Residue Cys280 coordinates [4Fe-4S] cluster. Ser327, Asp389, and Asp390 together coordinate Mg(2+). [4Fe-4S] cluster contacts are provided by Cys426, Cys503, and Cys506.

The protein in the C-terminal section; belongs to the purine/pyrimidine phosphoribosyltransferase family. In terms of assembly, homotetramer. Mg(2+) serves as cofactor. Requires [4Fe-4S] cluster as cofactor. As to expression, ubiquitously expressed.

It carries out the reaction 5-phospho-beta-D-ribosylamine + L-glutamate + diphosphate = 5-phospho-alpha-D-ribose 1-diphosphate + L-glutamine + H2O. It participates in purine metabolism; IMP biosynthesis via de novo pathway; N(1)-(5-phospho-D-ribosyl)glycinamide from 5-phospho-alpha-D-ribose 1-diphosphate: step 1/2. Functionally, catalyzes the formation of phosphoribosylamine from phosphoribosylpyrophosphate (PRPP) and glutamine. The chain is Amidophosphoribosyltransferase (PPAT) from Homo sapiens (Human).